The sequence spans 498 residues: ATP synthase subunit beta, chloroplastic (498 aa).

172 to 179 (GGAGVGKT) contributes to the ATP binding site.

Belongs to the ATPase alpha/beta chains family. As to quaternary structure, F-type ATPases have 2 components, CF(1) - the catalytic core - and CF(0) - the membrane proton channel. CF(1) has five subunits: alpha(3), beta(3), gamma(1), delta(1), epsilon(1). CF(0) has four main subunits: a(1), b(1), b'(1) and c(9-12).

The protein localises to the plastid. It is found in the chloroplast thylakoid membrane. It catalyses the reaction ATP + H2O + 4 H(+)(in) = ADP + phosphate + 5 H(+)(out). In terms of biological role, produces ATP from ADP in the presence of a proton gradient across the membrane. The catalytic sites are hosted primarily by the beta subunits. The chain is ATP synthase subunit beta, chloroplastic from Jasminum nudiflorum (Winter jasmine).